The primary structure comprises 488 residues: Dipeptidase 3 (488 aa).

Residues 1 to 35 form the signal peptide; the sequence is MQPTGPEGPRALSLRPLGHRLSLLGVLLIIPSLWV. The span at 41-60 shows a compositional bias: low complexity; it reads TPSLSSAPTSPGASSAMTTP. The disordered stretch occupies residues 41–74; it reads TPSLSSAPTSPGASSAMTTPGIPNDTTTSGVTSD. 2 disulfides stabilise this stretch: C143/C222 and C294/C326. N331 carries N-linked (GlcNAc...) asparagine glycosylation. Residue S459 is the site of GPI-anchor amidated serine attachment. Positions 460–487 are cleaved as a propeptide — removed in mature form; the sequence is KAPPCPLLGLVAAVTSPAFTLWLCCSGH.

This sequence belongs to the metallo-dependent hydrolases superfamily. Peptidase M19 family. In terms of assembly, homodimer; disulfide-linked. Interacts with TEX101; co-localized on the cell surface of spermatocytes, spermatids, and testicular spermatozoa, co-localized only in cytoplasmic droplets of caput and corpus epididymal sperm.

It localises to the membrane. Functionally, lacks dipeptidase activity and is unable to hydrolyze cystinyl-bis-glycine, leukotriene D4 and the beta-lactam antibiotic imipenem. The absence of activity may be due to the inability of serine (instead of aspartate found in DPEP1/2) at position 356 to function as the acid/base catalyst and activate the nucleophilic water/hydroxide. This chain is Dipeptidase 3 (Dpep3), found in Rattus norvegicus (Rat).